Here is a 599-residue protein sequence, read N- to C-terminus: Elongation factor 4 (599 aa).

Positions 2-185 constitute a tr-type G domain; sequence KYIRNFSIIA…RIIIDIPVPQ (184 aa). GTP is bound by residues 14-19 and 132-135; these read NHGKST and NKID.

Belongs to the TRAFAC class translation factor GTPase superfamily. Classic translation factor GTPase family. LepA subfamily.

The protein localises to the cell inner membrane. It carries out the reaction GTP + H2O = GDP + phosphate + H(+). Required for accurate and efficient protein synthesis under certain stress conditions. May act as a fidelity factor of the translation reaction, by catalyzing a one-codon backward translocation of tRNAs on improperly translocated ribosomes. Back-translocation proceeds from a post-translocation (POST) complex to a pre-translocation (PRE) complex, thus giving elongation factor G a second chance to translocate the tRNAs correctly. Binds to ribosomes in a GTP-dependent manner. The protein is Elongation factor 4 of Blochmanniella floridana.